A 382-amino-acid chain; its full sequence is 1-deoxy-D-xylulose 5-phosphate reductoisomerase (382 aa).

The NADPH site is built by threonine 10, glycine 11, serine 12, isoleucine 13, asparagine 38, and asparagine 120. Position 121 (lysine 121) interacts with 1-deoxy-D-xylulose 5-phosphate. Glutamate 122 contacts NADPH. Aspartate 146 is a Mn(2+) binding site. Serine 147, glutamate 148, serine 172, and histidine 195 together coordinate 1-deoxy-D-xylulose 5-phosphate. Glutamate 148 is a Mn(2+) binding site. Glycine 201 provides a ligand contact to NADPH. 4 residues coordinate 1-deoxy-D-xylulose 5-phosphate: serine 208, asparagine 213, lysine 214, and glutamate 217. A Mn(2+)-binding site is contributed by glutamate 217.

This sequence belongs to the DXR family. Requires Mg(2+) as cofactor. Mn(2+) is required as a cofactor.

It catalyses the reaction 2-C-methyl-D-erythritol 4-phosphate + NADP(+) = 1-deoxy-D-xylulose 5-phosphate + NADPH + H(+). It participates in isoprenoid biosynthesis; isopentenyl diphosphate biosynthesis via DXP pathway; isopentenyl diphosphate from 1-deoxy-D-xylulose 5-phosphate: step 1/6. Functionally, catalyzes the NADPH-dependent rearrangement and reduction of 1-deoxy-D-xylulose-5-phosphate (DXP) to 2-C-methyl-D-erythritol 4-phosphate (MEP). This Caldanaerobacter subterraneus subsp. tengcongensis (strain DSM 15242 / JCM 11007 / NBRC 100824 / MB4) (Thermoanaerobacter tengcongensis) protein is 1-deoxy-D-xylulose 5-phosphate reductoisomerase.